The chain runs to 539 residues: MDVRRGGGGGRIVGAARRALTWGALPLPMRITNGLAMVSLVLSSCDLLRLCSDRERPLGGREFATVVCQLASVVYLLSLFAHPDAPATTTGDDDDGQGGSRRARPAAAEPAPMHGHGGGMMEADDEEIVAAVASGALPSHRLESRLGDCRRAARLRREALRRVTGRGVEGLPFDGMDYQAILGQCCEMPVGYVQLPVGVAGPLLLDGREYHVPMATTEGCLVASVNRGCRAISASGGAFSVLLRDAMSRAPAVKLPSAMRAAELKAFAEAPANFELLAAVFNRSSRFGRLQDIRCALAGRNLYMRFSCITGDAMGMNMVSKGVENVLGYLQNVFPDMDVISVSGNYCSDKKPTAVNWIEGRGKSVVCEAIIKGDVVQKVLKTTVEKLVELNIIKNLAGSAVAGALGGFNAHASNIVTALFIATGQDPAQNVESSQCITMLEEVDDGDDLHISVTMPSIEVGTIGGGTCLASQAACLNLLGVKGSNHGSPGANAKRLATIVAGSVLAGELSLLAALASGHLVKSHMMYNRSSKDVAKAAS.

Residues 63–83 (FATVVCQLASVVYLLSLFAHP) traverse the membrane as a helical segment. The tract at residues 84–124 (DAPATTTGDDDDGQGGSRRARPAAAEPAPMHGHGGGMMEAD) is linker. Residues 87–116 (ATTTGDDDDGQGGSRRARPAAAEPAPMHGH) are disordered. Residues 105–114 (PAAAEPAPMH) are compositionally biased toward low complexity. The interval 125 to 539 (DEEIVAAVAS…SSKDVAKAAS (415 aa)) is catalytic. Catalysis depends on glutamate 218, which acts as the Charge relay system. Asparagine 282 is a glycosylation site (N-linked (GlcNAc...) asparagine). Catalysis depends on charge relay system residues lysine 350 and aspartate 426. The helical transmembrane segment at 496–516 (LATIVAGSVLAGELSLLAALA) threads the bilayer. Histidine 524 serves as the catalytic Proton donor. The N-linked (GlcNAc...) asparagine glycan is linked to asparagine 528.

The protein belongs to the HMG-CoA reductase family.

It is found in the endoplasmic reticulum membrane. The catalysed reaction is (R)-mevalonate + 2 NADP(+) + CoA = (3S)-3-hydroxy-3-methylglutaryl-CoA + 2 NADPH + 2 H(+). The protein operates within metabolic intermediate biosynthesis; (R)-mevalonate biosynthesis; (R)-mevalonate from acetyl-CoA: step 3/3. Functionally, catalyzes the synthesis of mevalonate. The specific precursor of all isoprenoid compounds present in plants. The polypeptide is 3-hydroxy-3-methylglutaryl-coenzyme A reductase 1 (HMG1) (Oryza sativa subsp. indica (Rice)).